The following is a 441-amino-acid chain: Tol-Pal system protein TolB (441 aa).

A signal peptide spans 1 to 39 (MPTMTPAFSRASLSEALRSYGLALLLFLATLLAWQPAHA).

This sequence belongs to the TolB family. In terms of assembly, the Tol-Pal system is composed of five core proteins: the inner membrane proteins TolA, TolQ and TolR, the periplasmic protein TolB and the outer membrane protein Pal. They form a network linking the inner and outer membranes and the peptidoglycan layer.

The protein resides in the periplasm. Part of the Tol-Pal system, which plays a role in outer membrane invagination during cell division and is important for maintaining outer membrane integrity. This Bordetella avium (strain 197N) protein is Tol-Pal system protein TolB.